A 285-amino-acid chain; its full sequence is Acetyl-coenzyme A carboxylase carboxyl transferase subunit beta (285 aa).

Residues 24 to 285 (GLWYKSPTGK…DLIQNQPVRA (262 aa)) form the CoA carboxyltransferase N-terminal domain.

The protein belongs to the AccD/PCCB family. Acetyl-CoA carboxylase is a heterohexamer composed of biotin carboxyl carrier protein (AccB), biotin carboxylase (AccC) and two subunits each of ACCase subunit alpha (AccA) and ACCase subunit beta (AccD).

The protein localises to the cytoplasm. It carries out the reaction N(6)-carboxybiotinyl-L-lysyl-[protein] + acetyl-CoA = N(6)-biotinyl-L-lysyl-[protein] + malonyl-CoA. It functions in the pathway lipid metabolism; malonyl-CoA biosynthesis; malonyl-CoA from acetyl-CoA: step 1/1. Component of the acetyl coenzyme A carboxylase (ACC) complex. Biotin carboxylase (BC) catalyzes the carboxylation of biotin on its carrier protein (BCCP) and then the CO(2) group is transferred by the transcarboxylase to acetyl-CoA to form malonyl-CoA. The polypeptide is Acetyl-coenzyme A carboxylase carboxyl transferase subunit beta (Christiangramia forsetii (strain DSM 17595 / CGMCC 1.15422 / KT0803) (Gramella forsetii)).